Reading from the N-terminus, the 228-residue chain is Ferric nitrobindin-like protein (228 aa).

The disordered stretch occupies residues 1-21; it reads MTSDEVRDGAGSPADSSKGNK. The GXWXGXG motif lies at 75–81; the sequence is GVWRGEG.

Belongs to the nitrobindin family.

The polypeptide is Ferric nitrobindin-like protein (Mycobacterium leprae (strain TN)).